Consider the following 122-residue polypeptide: Large ribosomal subunit protein uL24 (122 aa).

Belongs to the universal ribosomal protein uL24 family. As to quaternary structure, part of the 50S ribosomal subunit.

One of two assembly initiator proteins, it binds directly to the 5'-end of the 23S rRNA, where it nucleates assembly of the 50S subunit. Its function is as follows. Located at the polypeptide exit tunnel on the outside of the subunit. This Methanosarcina mazei (strain ATCC BAA-159 / DSM 3647 / Goe1 / Go1 / JCM 11833 / OCM 88) (Methanosarcina frisia) protein is Large ribosomal subunit protein uL24.